The sequence spans 181 residues: ATP synthase subunit delta (181 aa).

The protein belongs to the ATPase delta chain family. As to quaternary structure, F-type ATPases have 2 components, F(1) - the catalytic core - and F(0) - the membrane proton channel. F(1) has five subunits: alpha(3), beta(3), gamma(1), delta(1), epsilon(1). F(0) has three main subunits: a(1), b(2) and c(10-14). The alpha and beta chains form an alternating ring which encloses part of the gamma chain. F(1) is attached to F(0) by a central stalk formed by the gamma and epsilon chains, while a peripheral stalk is formed by the delta and b chains.

The protein resides in the cell inner membrane. Functionally, f(1)F(0) ATP synthase produces ATP from ADP in the presence of a proton or sodium gradient. F-type ATPases consist of two structural domains, F(1) containing the extramembraneous catalytic core and F(0) containing the membrane proton channel, linked together by a central stalk and a peripheral stalk. During catalysis, ATP synthesis in the catalytic domain of F(1) is coupled via a rotary mechanism of the central stalk subunits to proton translocation. In terms of biological role, this protein is part of the stalk that links CF(0) to CF(1). It either transmits conformational changes from CF(0) to CF(1) or is implicated in proton conduction. This is ATP synthase subunit delta from Mannheimia succiniciproducens (strain KCTC 0769BP / MBEL55E).